A 464-amino-acid chain; its full sequence is Protein btn-1 (464 aa).

Residues 1-22 (MNRSPSSSGLLPLPGAPSSSWA) form the signal peptide. Transmembrane regions (helical) follow at residues 38 to 58 (AVFI…VIIL), 73 to 93 (VVLL…PYFI), 102 to 122 (IFIF…TPPS), 129 to 149 (LIGV…FLGL), 167 to 187 (GAGL…GLSV), 190 to 210 (SLLA…LILP), 288 to 308 (SLFF…YTIN), 332 to 352 (PFYG…IAFI), 354 to 374 (IHHL…LTLH), and 376 to 396 (LLNF…EGLL).

It belongs to the battenin family.

The protein resides in the vacuole membrane. Functionally, involved in vacuolar transport and vacuole pH homeostasis. Also required for cytokinesis. The protein is Protein btn-1 (cln3) of Neurospora crassa (strain ATCC 24698 / 74-OR23-1A / CBS 708.71 / DSM 1257 / FGSC 987).